The primary structure comprises 216 residues: Somatotropin (216 aa).

Residues 1–26 form the signal peptide; it reads MAAGPRNSMLLVFALLSLPWPQEVGA. Histidine 45 contacts Zn(2+). Cysteines 78 and 189 form a disulfide. Serine 131 bears the Phosphoserine mark. Glutamate 198 lines the Zn(2+) pocket. An intrachain disulfide couples cysteine 206 to cysteine 214.

This sequence belongs to the somatotropin/prolactin family.

It localises to the secreted. Plays an important role in growth control. Its major role in stimulating body growth is to stimulate the liver and other tissues to secrete IGF1. It stimulates both the differentiation and proliferation of myoblasts. It also stimulates amino acid uptake and protein synthesis in muscle and other tissues. This chain is Somatotropin (GH1), found in Neovison vison (American mink).